The sequence spans 213 residues: UPF0301 protein Aave_0907 (213 aa).

The interval 93-120 (MGPSSGKQAAGEGGAQAEGEGAEESAYA) is disordered.

Belongs to the UPF0301 (AlgH) family.

The polypeptide is UPF0301 protein Aave_0907 (Paracidovorax citrulli (strain AAC00-1) (Acidovorax citrulli)).